We begin with the raw amino-acid sequence, 340 residues long: Cysteinyl leukotriene receptor 1 (340 aa).

The Extracellular segment spans residues 1 to 31 (MDETGNPTIPPASNNTCYDSIDDFRNQVYST). Asparagine 14 is a glycosylation site (N-linked (GlcNAc...) asparagine). The chain crosses the membrane as a helical span at residues 32 to 52 (LYSMISVVGFFGNGFVLYVLV). At 53-60 (KTYHEKSA) the chain is on the cytoplasmic side. Residues 61–81 (FQVYMINLAVADLLCVCTLPL) traverse the membrane as a helical segment. Over 82-109 (RVAYYVHKGIWLFGDFLCRLSTYALYVN) the chain is Extracellular. Cysteine 99 and cysteine 176 are disulfide-bonded. A helical membrane pass occupies residues 110–130 (LYCSIFFMTAMSFFRCVAIVF). Residues 131 to 144 (PVQNISLVTQKKAR) lie on the Cytoplasmic side of the membrane. The chain crosses the membrane as a helical span at residues 145–165 (LVCIAIWMFVILTSSPFLMAN). The Extracellular segment spans residues 166–196 (TYKDEKNNTKCFEPPQDNQAKNYVLILHYVS). An N-linked (GlcNAc...) asparagine glycan is attached at asparagine 172. Residues 197–217 (LFIGFIIPFITIIVCYTMIIF) form a helical membrane-spanning segment. Residues 218–233 (TLLKSSMKKNLSSRKR) lie on the Cytoplasmic side of the membrane. Residues 234-254 (AIGMIIVVTAAFLVSFMPYHI) form a helical membrane-spanning segment. Residues 255–279 (QRTIHLHFLHNKTKPCDSILRMQKS) lie on the Extracellular side of the membrane. N-linked (GlcNAc...) asparagine glycosylation occurs at asparagine 265. The helical transmembrane segment at 280–300 (VVITLSLAASNCCFDPLLYFF) threads the bilayer. Residues 301–340 (SGGNFRRRLSTIRKYSLSSMTYIPKKKTSLPQKGKDICKE) lie on the Cytoplasmic side of the membrane.

This sequence belongs to the G-protein coupled receptor 1 family.

Its subcellular location is the cell membrane. Its function is as follows. Receptor for cysteinyl leukotrienes mediating bronchoconstriction of individuals with and without asthma. Stimulation by LTD4 results in the contraction and proliferation of smooth muscle, edema, eosinophil migration and damage to the mucus layer in the lung. This response is mediated via a G-protein that activates a phosphatidylinositol-calcium second messenger system. The polypeptide is Cysteinyl leukotriene receptor 1 (CYSLTR1) (Cavia porcellus (Guinea pig)).